Reading from the N-terminus, the 241-residue chain is MSMTHTTPLVPKNVAIVPAAGIGARMAAGMPKQYLTLGAQSILGHTLDALLSHPQIAQVIVALHPHDDMFLGLPQAKHSKLLTVIGGGERADSVLAALAVAPQDAWALVHDAARPCLTHSDIDKLLASTSEFPQGAILAMPVRDTMKRSDDTGVINHTVDRALLWHALTPQYFPVAELLTNLSAALNAGVVITDEASAMEWAGVFPGLVSGRADNIKVTHPDDLHLAGLFMAHLSAKPLVE.

This sequence belongs to the IspD/TarI cytidylyltransferase family. IspD subfamily.

The catalysed reaction is 2-C-methyl-D-erythritol 4-phosphate + CTP + H(+) = 4-CDP-2-C-methyl-D-erythritol + diphosphate. The protein operates within isoprenoid biosynthesis; isopentenyl diphosphate biosynthesis via DXP pathway; isopentenyl diphosphate from 1-deoxy-D-xylulose 5-phosphate: step 2/6. Functionally, catalyzes the formation of 4-diphosphocytidyl-2-C-methyl-D-erythritol from CTP and 2-C-methyl-D-erythritol 4-phosphate (MEP). This is 2-C-methyl-D-erythritol 4-phosphate cytidylyltransferase from Shewanella denitrificans (strain OS217 / ATCC BAA-1090 / DSM 15013).